Here is a 498-residue protein sequence, read N- to C-terminus: Elastase (498 aa).

Residues 1-23 (MKKVSTLDLLFVAIMGVSPAAFA) form the signal peptide. Residues 24–197 (ADLIDVSKLP…VLDQWEGLAH (174 aa)) constitute a propeptide that is removed on maturation. Cysteine 227 and cysteine 255 are disulfide-bonded. Threonine 236 is modified (phosphothreonine). A Ca(2+)-binding site is contributed by aspartate 333. Histidine 337 lines the Zn(2+) pocket. The active site involves glutamate 338. Zn(2+) contacts are provided by histidine 341 and glutamate 361. The Ca(2+) site is built by glutamate 369, glutamate 372, aspartate 380, and leucine 382. Histidine 420 (proton donor) is an active-site residue. Residues cysteine 467 and cysteine 494 are joined by a disulfide bond.

It belongs to the peptidase M4 family. It depends on Ca(2+) as a cofactor. The cofactor is Zn(2+). Made as a pre-pro-protein which is exported to the periplasm. Probably autocatalyzes cleavage of its pro-peptide. The pro-peptide can be secreted with mature elastase.

It localises to the secreted. The catalysed reaction is Hydrolysis of proteins including elastin, collagen types III and IV, fibronectin and immunoglobulin A, generally with bulky hydrophobic group at P1'. Insulin B chain cleavage pattern identical to that of thermolysin, but specificity differs in other respects.. Functionally, cleaves host elastase, collagen, IgI and several complement components as well as endogenous pro-aminopeptidase, pro-chitin-binding protein (cbpD). Cleaves its own pro-peptide. Involved in the pathogenesis of P.aeruginosa infections. The sequence is that of Elastase (lasB) from Pseudomonas aeruginosa (strain UCBPP-PA14).